Reading from the N-terminus, the 237-residue chain is Purine nucleoside phosphorylase DeoD-type (237 aa).

A purine D-ribonucleoside is bound at residue His-4. Phosphate contacts are provided by residues Gly-20, Arg-24, Arg-43, and Arg-87–Thr-90. Residues Glu-179–Glu-181 and Ser-203–Asp-204 contribute to the a purine D-ribonucleoside site. Asp-204 (proton donor) is an active-site residue.

The protein belongs to the PNP/UDP phosphorylase family. As to quaternary structure, homohexamer; trimer of homodimers.

The enzyme catalyses a purine D-ribonucleoside + phosphate = a purine nucleobase + alpha-D-ribose 1-phosphate. It catalyses the reaction a purine 2'-deoxy-D-ribonucleoside + phosphate = a purine nucleobase + 2-deoxy-alpha-D-ribose 1-phosphate. Its function is as follows. Catalyzes the reversible phosphorolytic breakdown of the N-glycosidic bond in the beta-(deoxy)ribonucleoside molecules, with the formation of the corresponding free purine bases and pentose-1-phosphate. This Streptococcus uberis (strain ATCC BAA-854 / 0140J) protein is Purine nucleoside phosphorylase DeoD-type.